A 750-amino-acid chain; its full sequence is Photosystem I P700 chlorophyll a apoprotein A1 (750 aa).

Helical transmembrane passes span 70–93 (VFSA…FHGA), 156–179 (LYCT…FHYH), 195–219 (LNHH…HVSL), 291–309 (IAHH…GHMY), 346–369 (WHAQ…HHMY), 385–411 (LSLF…IFMV), 433–455 (AIIS…LYIH), and 531–549 (FLVH…LILL). 2 residues coordinate [4Fe-4S] cluster: Cys-573 and Cys-582. The next 2 helical transmembrane spans lie at 589 to 610 (HVFL…HFSW) and 664 to 686 (LSAY…MFLF). His-675 is a binding site for chlorophyll a'. Positions 683 and 691 each coordinate chlorophyll a. Position 692 (Trp-692) interacts with phylloquinone. Residues 724 to 744 (AVGVTHYLLGGIATTWAFFLA) form a helical membrane-spanning segment.

The protein belongs to the PsaA/PsaB family. In terms of assembly, the PsaA/B heterodimer binds the P700 chlorophyll special pair and subsequent electron acceptors. PSI consists of a core antenna complex that captures photons, and an electron transfer chain that converts photonic excitation into a charge separation. The eukaryotic PSI reaction center is composed of at least 11 subunits. Requires P700 is a chlorophyll a/chlorophyll a' dimer, A0 is one or more chlorophyll a, A1 is one or both phylloquinones and FX is a shared 4Fe-4S iron-sulfur center. as cofactor.

The protein resides in the plastid. It localises to the chloroplast thylakoid membrane. It catalyses the reaction reduced [plastocyanin] + hnu + oxidized [2Fe-2S]-[ferredoxin] = oxidized [plastocyanin] + reduced [2Fe-2S]-[ferredoxin]. Its function is as follows. PsaA and PsaB bind P700, the primary electron donor of photosystem I (PSI), as well as the electron acceptors A0, A1 and FX. PSI is a plastocyanin-ferredoxin oxidoreductase, converting photonic excitation into a charge separation, which transfers an electron from the donor P700 chlorophyll pair to the spectroscopically characterized acceptors A0, A1, FX, FA and FB in turn. Oxidized P700 is reduced on the lumenal side of the thylakoid membrane by plastocyanin. This Draba nemorosa (Woodland whitlowgrass) protein is Photosystem I P700 chlorophyll a apoprotein A1.